The sequence spans 331 residues: Cytosolic sulfotransferase 1 (331 aa).

3'-phosphoadenylyl sulfate is bound at residue 74 to 79; it reads KSGTTW. His143 (proton acceptor) is an active-site residue. 3'-phosphoadenylyl sulfate contacts are provided by residues Arg165, Ser173, Tyr231, and 297–299; that span reads RKG.

This sequence belongs to the sulfotransferase 1 family.

It localises to the cytoplasm. Its function is as follows. Sulfotransferase that utilizes 3'-phospho-5'-adenylyl sulfate (PAPS) as sulfonate donor. The chain is Cytosolic sulfotransferase 1 (SOT1) from Arabidopsis thaliana (Mouse-ear cress).